The chain runs to 207 residues: Large ribosomal subunit protein uL4 (207 aa).

The segment at 45–89 is disordered; the sequence is RQGTHKVKTRSEVRGGGRKPWRQKGTGRARQGSIRSPQWRGGGTV. Basic residues predominate over residues 60-71; the sequence is GGRKPWRQKGTG.

The protein belongs to the universal ribosomal protein uL4 family. Part of the 50S ribosomal subunit.

Its function is as follows. One of the primary rRNA binding proteins, this protein initially binds near the 5'-end of the 23S rRNA. It is important during the early stages of 50S assembly. It makes multiple contacts with different domains of the 23S rRNA in the assembled 50S subunit and ribosome. In terms of biological role, forms part of the polypeptide exit tunnel. The sequence is that of Large ribosomal subunit protein uL4 from Bacillus mycoides (strain KBAB4) (Bacillus weihenstephanensis).